A 269-amino-acid polypeptide reads, in one-letter code: 3-ketodihydrosphingosine reductase (269 aa).

Residues Gly-10, Ser-12, Ser-13, Gly-14, Lys-36, and Asp-50 each coordinate NADPH. Residues 10–14 carry the GXSXG motif; it reads GASSG. Ser-12 (nucleophile; for lipase activity) is an active-site residue. Ser-128 serves as the catalytic Proton donor. Tyr-142 functions as the Proton acceptor in the catalytic mechanism. Tyr-142 and Lys-146 together coordinate NADP(+). Residues 142 to 146 and 175 to 177 each bind NADPH; these read YSASK and FNT. Lys-146 is an active-site residue. The active-site Lowers pKa of active site Tyr is the Lys-146.

It belongs to the short-chain dehydrogenases/reductases (SDR) family.

It carries out the reaction sphinganine + NADP(+) = 3-oxosphinganine + NADPH + H(+). The protein operates within lipid metabolism; sphingolipid metabolism. In terms of biological role, catalyzes the reduction of 3'-oxosphinganine (3-ketodihydrosphingosine/KDS) to sphinganine (dihydrosphingosine/DHS), the second step of de novo sphingolipid biosynthesis. The chain is 3-ketodihydrosphingosine reductase from Bacteroides thetaiotaomicron (strain ATCC 29148 / DSM 2079 / JCM 5827 / CCUG 10774 / NCTC 10582 / VPI-5482 / E50).